The primary structure comprises 836 residues: Transcriptional regulatory protein UME6 (836 aa).

The segment covering 1 to 14 has biased composition (basic and acidic residues); that stretch reads MLDKARSQSKHMDE. 4 disordered regions span residues 1–77, 92–168, 218–332, and 381–464; these read MLDK…IESL, STCA…CNGH, HLPP…DDQC, and NESS…GFFY. Polar residues-rich tracts occupy residues 39 to 48, 61 to 77, and 92 to 112; these read SRATLMNSSQ, GANS…IESL, and STCA…SLKV. The residue at position 114 (Ser-114) is a Phosphoserine. Residues 117–126 are compositionally biased toward basic and acidic residues; it reads DIKDDPKEND. A phosphoserine mark is found at Ser-141, Ser-150, and Ser-228. Low complexity predominate over residues 226–236; sequence AVSSPGTTAAG. The span at 258–272 shows a compositional bias: polar residues; it reads TSANKNNGKTTNSPM. Residues 273–305 show a composition bias toward low complexity; that stretch reads SILSRNNSTNNNDNNSIQSSDSRESSNNNEIGG. Ser-316 and Ser-318 each carry phosphoserine. Polar residues predominate over residues 316–325; it reads SPSNDSQVQH. The span at 381-398 shows a compositional bias: low complexity; the sequence is NESSSNNASSNTDTPTNS. The segment covering 399–414 has biased composition (polar residues); that stretch reads RHANTSSSITSRNNFQ. Residues 426-446 show a composition bias toward low complexity; it reads PTSASSFTSTNNNNPQRNNIN. Positions 508–594 are SIN3-binding; the sequence is NSASSSTKLD…QPIFESNNST (87 aa). The tract at residues 636–766 is disordered; it reads NGKRIDRRLS…ATSSTSQGTR (131 aa). Ser-645 is subject to Phosphoserine. Over residues 670-679 the composition is skewed to polar residues; that stretch reads VASQTNSDYN. The segment covering 680-702 has biased composition (low complexity); that stretch reads SLGESSTSSAPSSPSLKASSGLA. Residues 718–739 show a composition bias toward basic residues; that stretch reads SKGKNVKPKAKSKAKQSSKKRP. Positions 740–751 are enriched in low complexity; that stretch reads NNTTSKSKANNS. Positions 771–798 form a DNA-binding region, zn(2)-C6 fungal-type; that stretch reads CWICRLRKKKCTEERPHCFNCERLKLDC.

Component of the RPD3C(L) complex composed of at least ASH1, CTI6, DEP1, PHO23, RPD3, RXT2, RXT3, SAP30, SDS3, SIN3, UME1 and UME6. Interacts with RIM11, MCK1 and IME1. In terms of processing, phosphorylated by RIM11 and MCK1.

The protein resides in the nucleus. In terms of biological role, component of the RPD3C(L) histone deacetylase complex (HDAC) responsible for the deacetylation of lysine residues on the N-terminal part of the core histones (H2A, H2B, H3 and H4). Histone deacetylation gives a tag for epigenetic repression and plays an important role in transcriptional regulation, cell cycle progression and developmental events. Binds to the URS1 site (5'-AGCCGCCGA-3') and recruits the RPD3 histone deacetylase complex to the promoters to negatively regulate the expression of many genes including CAR1 (arginase), several required for sporulation, mating type switching, inositol metabolism, and oxidative carbon metabolism. Also recruits the ISW2 chromatin remodeling complex to promoters in a second gene repression pathway. Associates with the master regulator of meiosis IME1 in order to activate the expression of meiosis genes. Has both a positive and negative role in regulating phospholipid biosynthesis. In Saccharomyces cerevisiae (strain ATCC 204508 / S288c) (Baker's yeast), this protein is Transcriptional regulatory protein UME6 (UME6).